A 773-amino-acid polypeptide reads, in one-letter code: LON peptidase N-terminal domain and RING finger protein 1 (773 aa).

The segment at 1–29 (MSSPAVARTSPGGSREMAPAPQGRGRFWE) is disordered. Residues 48-81 (WELLLRRGELLALGGHLKGALEAFAAALRRGAPA) form a TPR 1 repeat. The RING-type 1 zinc finger occupies 123–159 (CLGCRGFLSEPVTVPCGHSYCRRCLRRELRARCRLCR). TPR repeat units lie at residues 212 to 244 (ARAAGRLGELLHQGRYREALAAACEALRAEPSD), 246 to 278 (IVKIYRAESYAGLQEFKAAIEDLNAVLFQLPDW), and 279 to 312 (PEVYFRKGKVLCDAGFLGDALQLFLQCLALDEDF). The span at 359–370 (EESQSLNEPSPK) shows a compositional bias: polar residues. The disordered stretch occupies residues 359-388 (EESQSLNEPSPKQSEEIPEVTSEPVKGSLN). Phosphoserine is present on S431. Residues 479 to 517 (CSLCMRLFFEPVTTPCGHSFCKNCLERCLDHAPYCPLCK) form an RING-type 2 zinc finger. The Lon N-terminal domain maps to 558 to 768 (TAELSHLTKN…KIQHILTYFS (211 aa)).

The chain is LON peptidase N-terminal domain and RING finger protein 1 (LONRF1) from Homo sapiens (Human).